A 169-amino-acid chain; its full sequence is NADH-quinone oxidoreductase subunit B (169 aa).

[4Fe-4S] cluster contacts are provided by cysteine 42, cysteine 43, cysteine 107, and cysteine 136.

Belongs to the complex I 20 kDa subunit family. NDH-1 is composed of 14 different subunits. Subunits NuoB, C, D, E, F, and G constitute the peripheral sector of the complex. It depends on [4Fe-4S] cluster as a cofactor.

The protein localises to the cell inner membrane. The enzyme catalyses a quinone + NADH + 5 H(+)(in) = a quinol + NAD(+) + 4 H(+)(out). Functionally, NDH-1 shuttles electrons from NADH, via FMN and iron-sulfur (Fe-S) centers, to quinones in the respiratory chain. The immediate electron acceptor for the enzyme in this species is believed to be ubiquinone. Couples the redox reaction to proton translocation (for every two electrons transferred, four hydrogen ions are translocated across the cytoplasmic membrane), and thus conserves the redox energy in a proton gradient. This chain is NADH-quinone oxidoreductase subunit B, found in Wolinella succinogenes (strain ATCC 29543 / DSM 1740 / CCUG 13145 / JCM 31913 / LMG 7466 / NCTC 11488 / FDC 602W) (Vibrio succinogenes).